The following is a 348-amino-acid chain: ATPase GET3 (348 aa).

ATP is bound at residue 26-33 (KGGVGKTT). The active site involves aspartate 57. ATP contacts are provided by glutamate 241 and asparagine 268. Zn(2+) is bound by residues cysteine 280 and cysteine 283. 310–312 (PLL) contacts ATP.

Belongs to the arsA ATPase family. Homodimer. Component of the Golgi to ER traffic (GET) complex, which is composed of GET1, GET2 and GET3. Within the complex, GET1 and GET2 form a heterotetramer which is stabilized by phosphatidylinositol binding and which binds to the GET3 homodimer. Interacts with the chloride channel protein GEF1.

It is found in the cytoplasm. Its subcellular location is the endoplasmic reticulum. It localises to the golgi apparatus. ATPase required for the post-translational delivery of tail-anchored (TA) proteins to the endoplasmic reticulum. Recognizes and selectively binds the transmembrane domain of TA proteins in the cytosol. This complex then targets to the endoplasmic reticulum by membrane-bound receptors GET1 and GET2, where the tail-anchored protein is released for insertion. This process is regulated by ATP binding and hydrolysis. ATP binding drives the homodimer towards the closed dimer state, facilitating recognition of newly synthesized TA membrane proteins. ATP hydrolysis is required for insertion. Subsequently, the homodimer reverts towards the open dimer state, lowering its affinity for the GET1-GET2 receptor, and returning it to the cytosol to initiate a new round of targeting. Cooperates with the HDEL receptor ERD2 to mediate the ATP-dependent retrieval of resident ER proteins that contain a C-terminal H-D-E-L retention signal from the Golgi to the ER. Involved in low-level resistance to the oxyanions arsenite and arsenate, and in heat tolerance. This chain is ATPase GET3, found in Debaryomyces hansenii (strain ATCC 36239 / CBS 767 / BCRC 21394 / JCM 1990 / NBRC 0083 / IGC 2968) (Yeast).